The sequence spans 91 residues: MTDTEVKAPKIEFPQVDYPVKVISDTGVGNKDKIIDIVKKHARINDERVDERQSSNGKYTTIQLHIVATDQDQLYNINSELRATGFVHMVL.

Belongs to the UPF0250 family.

In Pseudomonas fluorescens (strain Pf0-1), this protein is UPF0250 protein Pfl01_4965.